The primary structure comprises 242 residues: Glucosamine-6-phosphate deaminase (242 aa).

The active-site Proton acceptor; for enolization step is Asp-67. Asn-136 functions as the For ring-opening step in the catalytic mechanism. The Proton acceptor; for ring-opening step role is filled by His-138. Glu-143 acts as the For ring-opening step in catalysis.

It belongs to the glucosamine/galactosamine-6-phosphate isomerase family. NagB subfamily.

The enzyme catalyses alpha-D-glucosamine 6-phosphate + H2O = beta-D-fructose 6-phosphate + NH4(+). It functions in the pathway amino-sugar metabolism; N-acetylneuraminate degradation; D-fructose 6-phosphate from N-acetylneuraminate: step 5/5. Functionally, catalyzes the reversible isomerization-deamination of glucosamine 6-phosphate (GlcN6P) to form fructose 6-phosphate (Fru6P) and ammonium ion. This is Glucosamine-6-phosphate deaminase from Alkaliphilus metalliredigens (strain QYMF).